The following is a 692-amino-acid chain: UvrABC system protein B (692 aa).

The region spanning 32–187 (ENIENGEKAQ…LLNDLVGIQF (156 aa)) is the Helicase ATP-binding domain. Position 45-52 (45-52 (GATGTGKT)) interacts with ATP. A Beta-hairpin motif is present at residues 98-121 (YYDYYQPEAYVPSSDTYIEKDSSV). In terms of domain architecture, Helicase C-terminal spans 436–631 (QIDDLVGEIH…TIKKEIRDLI (196 aa)). The UVR domain occupies 656–691 (KALVKKLEKEMQQAAAALDFEGAAQLRDMVLELRAM).

Belongs to the UvrB family. Forms a heterotetramer with UvrA during the search for lesions. Interacts with UvrC in an incision complex.

It is found in the cytoplasm. Its function is as follows. The UvrABC repair system catalyzes the recognition and processing of DNA lesions. A damage recognition complex composed of 2 UvrA and 2 UvrB subunits scans DNA for abnormalities. Upon binding of the UvrA(2)B(2) complex to a putative damaged site, the DNA wraps around one UvrB monomer. DNA wrap is dependent on ATP binding by UvrB and probably causes local melting of the DNA helix, facilitating insertion of UvrB beta-hairpin between the DNA strands. Then UvrB probes one DNA strand for the presence of a lesion. If a lesion is found the UvrA subunits dissociate and the UvrB-DNA preincision complex is formed. This complex is subsequently bound by UvrC and the second UvrB is released. If no lesion is found, the DNA wraps around the other UvrB subunit that will check the other stand for damage. This chain is UvrABC system protein B, found in Lactococcus lactis subsp. cremoris (strain MG1363).